The chain runs to 283 residues: Agmatinase (283 aa).

Residues histidine 112, aspartate 131, histidine 133, aspartate 135, aspartate 211, and aspartate 213 each coordinate a divalent metal cation.

It belongs to the arginase family. Agmatinase subfamily. Homotetramer. Requires a divalent metal cation as cofactor.

The catalysed reaction is agmatine + H2O = urea + putrescine. The protein operates within amine and polyamine biosynthesis; putrescine biosynthesis via agmatine pathway; putrescine from agmatine: step 1/1. Inhibited by putrescine. Activity is not affected by arginine and ornithine. Catalyzes the formation of putrescine from agmatine. Cannot use arginine. The chain is Agmatinase from Pyrococcus horikoshii (strain ATCC 700860 / DSM 12428 / JCM 9974 / NBRC 100139 / OT-3).